Here is a 238-residue protein sequence, read N- to C-terminus: tRNA (guanine-N(7)-)-methyltransferase (238 aa).

S-adenosyl-L-methionine is bound by residues Glu68, Glu93, Asp120, and Asp143. Asp143 is a catalytic residue. Substrate-binding positions include Lys147, Asp179, and 216–219 (TKFE).

This sequence belongs to the class I-like SAM-binding methyltransferase superfamily. TrmB family.

The catalysed reaction is guanosine(46) in tRNA + S-adenosyl-L-methionine = N(7)-methylguanosine(46) in tRNA + S-adenosyl-L-homocysteine. It functions in the pathway tRNA modification; N(7)-methylguanine-tRNA biosynthesis. Its function is as follows. Catalyzes the formation of N(7)-methylguanine at position 46 (m7G46) in tRNA. The polypeptide is tRNA (guanine-N(7)-)-methyltransferase (Shewanella denitrificans (strain OS217 / ATCC BAA-1090 / DSM 15013)).